The following is a 119-amino-acid chain: Large ribosomal subunit protein uL18 (119 aa).

It belongs to the universal ribosomal protein uL18 family. Part of the 50S ribosomal subunit; part of the 5S rRNA/L5/L18/L25 subcomplex. Contacts the 5S and 23S rRNAs.

In terms of biological role, this is one of the proteins that bind and probably mediate the attachment of the 5S RNA into the large ribosomal subunit, where it forms part of the central protuberance. This is Large ribosomal subunit protein uL18 from Cereibacter sphaeroides (strain ATCC 17025 / ATH 2.4.3) (Rhodobacter sphaeroides).